A 478-amino-acid chain; its full sequence is Odorant receptor coreceptor (478 aa).

At 1-43 (MMKMKQQGLVADLLPNIRVMKTFGHFVFNYYNDNSSKYLHKVY) the chain is on the cytoplasmic side. Residues 44-64 (CCVNLFMLLLQFGLCAVNLIV) form a helical membrane-spanning segment. Topologically, residues 65-73 (ESADVDDLT) are extracellular. A helical transmembrane segment spans residues 74–94 (ANTITLLFFTHSIVKICYFAI). Topologically, residues 95-133 (RSKYFYRTWAIWNNPNSHPLFAESNARYHAIALKKMRLL) are cytoplasmic. A helical membrane pass occupies residues 134-154 (LFLVGGTTMLAAVAWTVLTFF). At 155 to 190 (EHPIRKIVDPVTNETEIIELPQLLIRSFYPFDAGKG) the chain is on the extracellular side. N-linked (GlcNAc...) asparagine glycosylation occurs at asparagine 167. The chain crosses the membrane as a helical span at residues 191 to 211 (ITHVLVLVYQFYWVLFMLIDA). At 212-349 (NSLDVLFCSW…IVRLVTAVGD (138 aa)) the chain is on the cytoplasmic side. Positions 261-281 (SADHLRDGDNPPPPPPPQSDN) are disordered. A helical membrane pass occupies residues 350-370 (AYGFALLLHMLTTTITLTLLA). Residues 371–382 (YQATKVNGINVY) are Extracellular-facing. The chain crosses the membrane as a helical span at residues 383 to 403 (AASTIGYILYTFGQVFLFCIF). Residues 404-454 (GNRLIEESTSVMEAAYSCHWYDGSEEAKTFVQIVCQQCQKAMSISGAKFFT) lie on the Cytoplasmic side of the membrane. A helical membrane pass occupies residues 455 to 475 (VSLDLFASVLGAVVTYFMVLV). Residues 476-478 (QLK) are Extracellular-facing.

It belongs to the insect chemoreceptor superfamily. Heteromeric odorant receptor channel (TC 1.A.69) family. Orco subfamily. Heterodimer with conventional odorant receptors (ORs). Present in antennae (at protein level).

It is found in the cell membrane. Its function is as follows. Odorant coreceptor which complexes with conventional odorant receptors (ORs) to form odorant-sensing units, providing sensitive and prolonged odorant signaling and calcium permeability. Obligate coreceptor of all odorant receptors. Orco is a universal and integral part of the functional odorant receptor, involved in the dendritic localization of other olfactory receptors. Can form functional ion channels in the absence of an odor-binding odorant receptor. Plays a central role in the perception of olfactory stimuli in ants and is essential for ant social organization. Required for pheromone sensing. Also required for the development and maintenance of odorant receptor neurons (ORNs) and of antennal lobe glomeruli. The polypeptide is Odorant receptor coreceptor (Ooceraea biroi (Clonal raider ant)).